Consider the following 441-residue polypeptide: Ankyrin repeat and MYND domain-containing protein 2 (441 aa).

3 ANK repeats span residues 45–74, 79–108, and 159–188; these read NGMT…DVNC, HGYT…ETDV, and KLAG…NPLL. C320, C323, C332, C335, C341, C345, H353, and C357 together coordinate Zn(2+). Residues 320–357 form an MYND-type zinc finger; it reads CTTCGEKGASKRCSVCKMVIYCDQTCQKTHWFTHKKIC. Residues 374-384 are compositionally biased toward basic and acidic residues; the sequence is EKRQEENHGKL. The tract at residues 374–441 is disordered; it reads EKRQEENHGK…APAGPQVSEE (68 aa).

In terms of assembly, interacts with the retinal-specific guanylyl cyclase GC1.

The protein localises to the cell projection. It is found in the cilium. May be involved in the trafficking of signaling proteins to the cilia. The protein is Ankyrin repeat and MYND domain-containing protein 2 (ANKMY2) of Homo sapiens (Human).